Here is a 173-residue protein sequence, read N- to C-terminus: Flavodoxin 2 (173 aa).

Residues 3–165 (MGLFYGSSTC…RIQTWCEQIL (163 aa)) enclose the Flavodoxin-like domain.

Belongs to the flavodoxin family. Requires FMN as cofactor.

In terms of biological role, low-potential electron donor to a number of redox enzymes. This is Flavodoxin 2 (fldB) from Salmonella typhi.